The chain runs to 883 residues: Phosphoenolpyruvate carboxylase (883 aa).

Residues His-138 and Lys-546 contribute to the active site.

It belongs to the PEPCase type 1 family. It depends on Mg(2+) as a cofactor.

It carries out the reaction oxaloacetate + phosphate = phosphoenolpyruvate + hydrogencarbonate. Forms oxaloacetate, a four-carbon dicarboxylic acid source for the tricarboxylic acid cycle. In Escherichia coli O127:H6 (strain E2348/69 / EPEC), this protein is Phosphoenolpyruvate carboxylase.